The primary structure comprises 449 residues: CCA-adding enzyme (449 aa).

ATP contacts are provided by Ser53 and Lys56. CTP-binding residues include Ser53 and Lys56. Residues Asp65, Asp67, and Asp119 each contribute to the Mg(2+) site. The ATP site is built by His142, Lys161, and Tyr170. Positions 142, 161, and 170 each coordinate CTP.

It belongs to the tRNA nucleotidyltransferase/poly(A) polymerase family. Archaeal CCA-adding enzyme subfamily. Homodimer. Mg(2+) serves as cofactor.

It carries out the reaction a tRNA precursor + 2 CTP + ATP = a tRNA with a 3' CCA end + 3 diphosphate. The catalysed reaction is a tRNA with a 3' CCA end + 2 CTP + ATP = a tRNA with a 3' CCACCA end + 3 diphosphate. Functionally, catalyzes the addition and repair of the essential 3'-terminal CCA sequence in tRNAs without using a nucleic acid template. Adds these three nucleotides in the order of C, C, and A to the tRNA nucleotide-73, using CTP and ATP as substrates and producing inorganic pyrophosphate. tRNA 3'-terminal CCA addition is required both for tRNA processing and repair. Also involved in tRNA surveillance by mediating tandem CCA addition to generate a CCACCA at the 3' terminus of unstable tRNAs. While stable tRNAs receive only 3'-terminal CCA, unstable tRNAs are marked with CCACCA and rapidly degraded. The chain is CCA-adding enzyme from Pyrococcus horikoshii (strain ATCC 700860 / DSM 12428 / JCM 9974 / NBRC 100139 / OT-3).